The chain runs to 363 residues: Cyanuric acid amidohydrolase (363 aa).

Positions Met-1–Asp-104 are RU A. Substrate-binding positions include Arg-52 and Ser-83–Gly-84. Positions Arg-112 to Glu-249 are RU B. Residue Lys-162 is part of the active site. Substrate-binding positions include Arg-194 and Ser-232 to Ala-233. The active-site Nucleophile is the Ser-232. The segment at Leu-255–Ala-363 is RU C. Glu-297 serves as a coordination point for Mg(2+). Substrate is bound by residues Arg-324 and Ser-343–Gly-344. Ala-346, Gln-349, Gly-350, Pro-351, and Gly-354 together coordinate Mg(2+).

The protein belongs to the cyclic amide hydrolase (CyAH) family. In terms of assembly, homotetramer.

It catalyses the reaction cyanurate + H2O = 1-carboxybiuret + H(+). It participates in xenobiotic degradation; atrazine degradation; biuret from cyanurate: step 1/1. Its activity is regulated as follows. Inhibited by barbituric acid. Responsible for the hydrolysis of cyanuric acid, an intermediate formed during catabolism of s-triazine based compounds in herbicides such as atrazine and polymers such as melamine. Catalyzes the hydrolytic opening of the s-triazine ring of cyanuric acid (2,4,6-trihydroxy-s-triazine) to yield carbon dioxide and carboxybiuret, which spontaneously decarboxylates to biuret. The polypeptide is Cyanuric acid amidohydrolase (atzD) (Pseudomonas sp. (strain ADP)).